The chain runs to 1357 residues: MAYSYTEKKRIRKDFSKLPDVMDVPYLLAIQLDSYREFLQAGATKEQFRDIGLHAAFKSVFPIISYSGNAALEYVGYRLGEPAFDVKECVLRGVTFAVPLRVKVRLIIFDRESSNKAIKDIKEQEVYMGEIPLMTENGTFIINGTERVIVSQLHRSPGVFFDHDRGKTHSSGKLLYSARIIPYRGSWLDFEFDPKDCVFVRIDRRRKLPASVLLRALGYSTEEILNAFYATNVFHIKGETLNLELVPQRLRGEVASIDIKDGSGKVIVEQGRRITARHINQLEKAGVTQLEVPFDYLIGRTIAKAIVHPATGEIIAECNTELTLDLLAKVAKAQVVRIETLYTNDIDCGPFISDTLKIDNTSNQLEALVEIYRMMRPGEPPTKEAAETLFGNLFFSAERYDLSAVGRMKFNRRIGRTEIEGPGVLSKEDIIDVLKTLVDIRNGKGIVDDIDHLGNRRVRCVGEMAENQFRVGLVRVERAVKERLSMAESEGLMPQDLINAKPVAAAIKEFFGSSQLSQFMDQNNPLSEITHKRRVSALGPGGLTRERAGFEVRDVHPTHYGRVCPIETPEGPNIGLINSLATYARTNKYGFLESPYRVVKDSLVTDEIVFLSAIEEADHVIAQASATLNEKGQLVDELVAVRHLNEFTVKAPEDVTLMDVSPKQVVSVAASLIPFLEHDDANRALMGSNMQRQAVPTLRADKPLVGTGMERNVARDSGVCVVARRGGVIDSVDASRVVVRVADDEVETGEAGVDIYNLTKYTRSNQNTCINQRPLVSKGDVVARGDILADGPSTDMGELALGQNMRVAFMPWNGFNFEDSICLSERVVQEDRFTTIHIQELTCVARDTKLGPEEITADIPNVGEAALNKLDEAGIVYVGAEVQAGDILVGKVTPKGETQLTPEEKLLRAIFGEKASDVKDTSLRVPTGTKGTVIDVQVFTRDGVERDSRALSIEKMQLDQIRKDLNEEFRIVEGATFERLRAALVGAKAEGGPALKKGTEITDDYLDGLERGQWFKLRMADDALNEQLEKAQAYISDRRQLLDDKFEDKKRKLQQGDDLAPGVLKIVKVYLAIKRRIQPGDKMAGRHGNKGVVSVIMPVEDMPHDANGTPVDIVLNPLGVPSRMNVGQILETHLGLAAKGLGEKINRMLEEQRKVAELRKFLHEIYNEIGGREENLDELGDNEILALAKNLRGGVPMATPVFDGAKEREIKAMLKLADLPESGQMRLFDGRTGNQFERPTTVGYMYMLKLNHLVDDKMHARSTGSYSLVTQQPLGGKAQFGGQRFGEMEVWALEAYGAAYTLQEMLTVKSDDVNGRTKMYKNIVDGDHRMEAGMPESFNVLIKEIRSLGIDIELETE.

Belongs to the RNA polymerase beta chain family. The RNAP catalytic core consists of 2 alpha, 1 beta, 1 beta' and 1 omega subunit. When a sigma factor is associated with the core the holoenzyme is formed, which can initiate transcription.

The enzyme catalyses RNA(n) + a ribonucleoside 5'-triphosphate = RNA(n+1) + diphosphate. DNA-dependent RNA polymerase catalyzes the transcription of DNA into RNA using the four ribonucleoside triphosphates as substrates. The polypeptide is DNA-directed RNA polymerase subunit beta (Pseudomonas paraeruginosa (strain DSM 24068 / PA7) (Pseudomonas aeruginosa (strain PA7))).